Reading from the N-terminus, the 668-residue chain is Fructose-1,6-bisphosphatase class 3 (668 aa).

It belongs to the FBPase class 3 family. Mn(2+) is required as a cofactor.

It catalyses the reaction beta-D-fructose 1,6-bisphosphate + H2O = beta-D-fructose 6-phosphate + phosphate. It participates in carbohydrate biosynthesis; gluconeogenesis. The sequence is that of Fructose-1,6-bisphosphatase class 3 from Clostridium botulinum (strain Loch Maree / Type A3).